The chain runs to 182 residues: UPF0316 protein BCG9842_B1857 (182 aa).

The next 3 helical transmembrane spans lie at 6-26 (LIFVLQIIYVPILTIRTILLV), 32-52 (SAAGVGLLEGAIYIVSLGIVF), and 58-78 (WMNIVAYVIGFSTGLLLGGYI).

This sequence belongs to the UPF0316 family.

The protein localises to the cell membrane. This chain is UPF0316 protein BCG9842_B1857, found in Bacillus cereus (strain G9842).